The following is a 728-amino-acid chain: 1,4-alpha-glucan branching enzyme GlgB (728 aa).

The active-site Nucleophile is the Asp-405. Glu-458 acts as the Proton donor in catalysis. The tract at residues 686–712 (YHGSNAGNAGAVQSDEHESHGRPHSLS) is disordered.

Belongs to the glycosyl hydrolase 13 family. GlgB subfamily. Monomer.

The catalysed reaction is Transfers a segment of a (1-&gt;4)-alpha-D-glucan chain to a primary hydroxy group in a similar glucan chain.. The protein operates within glycan biosynthesis; glycogen biosynthesis. In terms of biological role, catalyzes the formation of the alpha-1,6-glucosidic linkages in glycogen by scission of a 1,4-alpha-linked oligosaccharide from growing alpha-1,4-glucan chains and the subsequent attachment of the oligosaccharide to the alpha-1,6 position. This is 1,4-alpha-glucan branching enzyme GlgB from Enterobacter sp. (strain 638).